The chain runs to 436 residues: 2-(3-amino-3-carboxypropyl)histidine synthase subunit 1 (436 aa).

The disordered stretch occupies residues 1–27 (MAEVKKSIPKRRFVGKKNRKENNLDGS). Residues 7–19 (SIPKRRFVGKKNR) are compositionally biased toward basic residues. Cys130, Cys239, and Cys368 together coordinate [4Fe-4S] cluster. The disordered stretch occupies residues 417–436 (PNNPENRPLPNRKKTGPVSS). The span at 426–436 (PNRKKTGPVSS) shows a compositional bias: basic residues.

It belongs to the DPH1/DPH2 family. DPH1 subfamily. As to quaternary structure, component of the 2-(3-amino-3-carboxypropyl)histidine synthase complex composed of dph1, dph2, dph3 and a NADH-dependent reductase, predominantly cbr1. It depends on [4Fe-4S] cluster as a cofactor.

The protein resides in the cytoplasm. It catalyses the reaction L-histidyl-[translation elongation factor 2] + S-adenosyl-L-methionine = 2-[(3S)-amino-3-carboxypropyl]-L-histidyl-[translation elongation factor 2] + S-methyl-5'-thioadenosine + H(+). Its pathway is protein modification; peptidyl-diphthamide biosynthesis. Catalyzes the first step of diphthamide biosynthesis, a post-translational modification of histidine which occurs in elongation factor 2. Dph1 and dph2 transfer a 3-amino-3-carboxypropyl (ACP) group from S-adenosyl-L-methionine (SAM) to a histidine residue, the reaction is assisted by a reduction system comprising dph3 and a NADH-dependent reductase, predominantly cbr1. This Schizosaccharomyces pombe (strain 972 / ATCC 24843) (Fission yeast) protein is 2-(3-amino-3-carboxypropyl)histidine synthase subunit 1 (dph1).